A 345-amino-acid chain; its full sequence is Nicotinate-nucleotide--dimethylbenzimidazole phosphoribosyltransferase (345 aa).

Glutamate 312 serves as the catalytic Proton acceptor.

It belongs to the CobT family.

The catalysed reaction is 5,6-dimethylbenzimidazole + nicotinate beta-D-ribonucleotide = alpha-ribazole 5'-phosphate + nicotinate + H(+). It functions in the pathway nucleoside biosynthesis; alpha-ribazole biosynthesis; alpha-ribazole from 5,6-dimethylbenzimidazole: step 1/2. Its function is as follows. Catalyzes the synthesis of alpha-ribazole-5'-phosphate from nicotinate mononucleotide (NAMN) and 5,6-dimethylbenzimidazole (DMB). In Bacteroides fragilis (strain ATCC 25285 / DSM 2151 / CCUG 4856 / JCM 11019 / LMG 10263 / NCTC 9343 / Onslow / VPI 2553 / EN-2), this protein is Nicotinate-nucleotide--dimethylbenzimidazole phosphoribosyltransferase.